A 397-amino-acid chain; its full sequence is Formate-dependent phosphoribosylglycinamide formyltransferase (397 aa).

N(1)-(5-phospho-beta-D-ribosyl)glycinamide is bound by residues 22–23 (EL) and E82. ATP is bound by residues R114, K155, 160 to 165 (SSGKGQ), 195 to 198 (EGFV), and E203. Residues 119-312 (CLAAEELSLP…EFALHARAIL (194 aa)) enclose the ATP-grasp domain. E271 and E283 together coordinate Mg(2+). N(1)-(5-phospho-beta-D-ribosyl)glycinamide is bound by residues D290, K360, and 367–368 (RR).

It belongs to the PurK/PurT family. As to quaternary structure, homodimer.

It carries out the reaction N(1)-(5-phospho-beta-D-ribosyl)glycinamide + formate + ATP = N(2)-formyl-N(1)-(5-phospho-beta-D-ribosyl)glycinamide + ADP + phosphate + H(+). The protein operates within purine metabolism; IMP biosynthesis via de novo pathway; N(2)-formyl-N(1)-(5-phospho-D-ribosyl)glycinamide from N(1)-(5-phospho-D-ribosyl)glycinamide (formate route): step 1/1. Involved in the de novo purine biosynthesis. Catalyzes the transfer of formate to 5-phospho-ribosyl-glycinamide (GAR), producing 5-phospho-ribosyl-N-formylglycinamide (FGAR). Formate is provided by PurU via hydrolysis of 10-formyl-tetrahydrofolate. This chain is Formate-dependent phosphoribosylglycinamide formyltransferase, found in Alcanivorax borkumensis (strain ATCC 700651 / DSM 11573 / NCIMB 13689 / SK2).